Reading from the N-terminus, the 976-residue chain is Alpha-amylase (976 aa).

An N-terminal signal peptide occupies residues 1–33 (MKRGKLWGRLVSAAGLSLSIFLSSIGNVSTAYA). A disordered region spans residues 45–98 (TKENTESATDASSNEASDAEADNDTDEAITDASSKELSAENDGASESDSSFDEY). Positions 50–60 (ESATDASSNEA) are enriched in low complexity. 2 stretches are compositionally biased toward acidic residues: residues 61-73 (SDAEADNDTDEAI) and 87-96 (GASESDSSFD). The Ca(2+) site is built by asparagine 243, threonine 284, and aspartate 293. The active-site Nucleophile is the aspartate 323. Histidine 327 is a Ca(2+) binding site. The Proton donor role is filled by glutamate 375.

Belongs to the glycosyl hydrolase 13 family. As to quaternary structure, monomer. Ca(2+) serves as cofactor.

The catalysed reaction is Endohydrolysis of (1-&gt;4)-alpha-D-glucosidic linkages in polysaccharides containing three or more (1-&gt;4)-alpha-linked D-glucose units.. This chain is Alpha-amylase (amyA), found in Butyrivibrio fibrisolvens.